The chain runs to 916 residues: Nitrate reductase [NADH] 1 (916 aa).

The tract at residues 1-77 is disordered; it reads MAASVQPRQF…DDEEEEQEDW (77 aa). Acidic residues predominate over residues 66-76; the sequence is GSDDEEEEQED. Position 192 (cysteine 192) interacts with Mo-molybdopterin. Residues 541–616 form the Cytochrome b5 heme-binding domain; sequence GKQFTMSEVR…LDTYRIGELI (76 aa). 2 residues coordinate heme: histidine 576 and histidine 599. The 113-residue stretch at 656 to 768 folds into the FAD-binding FR-type domain; it reads RDKVPCQLVD…KGPLGHVEYT (113 aa). FAD is bound by residues 708–711, 725–729, phenylalanine 730, phenylalanine 737, 742–744, serine 792, and threonine 795; these read RAYT, LIKVY, and LMT.

Belongs to the nitrate reductase family. In terms of assembly, homodimer. Requires FAD as cofactor. Heme is required as a cofactor. The cofactor is Mo-molybdopterin.

It catalyses the reaction nitrite + NAD(+) + H2O = nitrate + NADH + H(+). In terms of biological role, nitrate reductase is a key enzyme involved in the first step of nitrate assimilation in plants, fungi and bacteria. The chain is Nitrate reductase [NADH] 1 (NIA1) from Oryza sativa subsp. japonica (Rice).